The primary structure comprises 211 residues: Protein YCF54, chloroplastic (211 aa).

The N-terminal 80 residues, 1 to 80 (MWSVTGALTV…GESTKYHFLV (80 aa)), are a transit peptide targeting the chloroplast.

It belongs to the ycf54 family. In terms of assembly, interacts with LFNR1 and CRD1/CHL27 in chloroplasts.

It is found in the plastid. The protein resides in the chloroplast. In terms of biological role, involved in the biosynthesis of chlorophyll; acts probably as a scaffolding factor in the MgProto monomethylester (MgProtoME) cyclase complex to stabilize CRD1/CHL27, the catalytic subunit which catalyzes the formation of a fifth isocyclic ring to tetrapyrroles to form protochlorophyllide. The sequence is that of Protein YCF54, chloroplastic from Arabidopsis thaliana (Mouse-ear cress).